The primary structure comprises 529 residues: Bifunctional purine biosynthesis protein PurH (529 aa).

The 148-residue stretch at 1–148 folds into the MGS-like domain; the sequence is MQQRRPVRRA…KNHKDVAIVV (148 aa). Lysine 287 is subject to N6-acetyllysine.

The protein belongs to the PurH family.

It carries out the reaction (6R)-10-formyltetrahydrofolate + 5-amino-1-(5-phospho-beta-D-ribosyl)imidazole-4-carboxamide = 5-formamido-1-(5-phospho-D-ribosyl)imidazole-4-carboxamide + (6S)-5,6,7,8-tetrahydrofolate. The catalysed reaction is IMP + H2O = 5-formamido-1-(5-phospho-D-ribosyl)imidazole-4-carboxamide. The protein operates within purine metabolism; IMP biosynthesis via de novo pathway; 5-formamido-1-(5-phospho-D-ribosyl)imidazole-4-carboxamide from 5-amino-1-(5-phospho-D-ribosyl)imidazole-4-carboxamide (10-formyl THF route): step 1/1. It functions in the pathway purine metabolism; IMP biosynthesis via de novo pathway; IMP from 5-formamido-1-(5-phospho-D-ribosyl)imidazole-4-carboxamide: step 1/1. The protein is Bifunctional purine biosynthesis protein PurH of Escherichia coli O8 (strain IAI1).